The primary structure comprises 178 residues: Large ribosomal subunit protein bL25 (178 aa).

The protein belongs to the bacterial ribosomal protein bL25 family. CTC subfamily. In terms of assembly, part of the 50S ribosomal subunit; part of the 5S rRNA/L5/L18/L25 subcomplex. Contacts the 5S rRNA. Binds to the 5S rRNA independently of L5 and L18.

In terms of biological role, this is one of the proteins that binds to the 5S RNA in the ribosome where it forms part of the central protuberance. In Sulfurimonas denitrificans (strain ATCC 33889 / DSM 1251) (Thiomicrospira denitrificans (strain ATCC 33889 / DSM 1251)), this protein is Large ribosomal subunit protein bL25.